The sequence spans 804 residues: Pentatricopeptide repeat-containing protein At4g35130, chloroplastic (804 aa).

A chloroplast-targeting transit peptide spans 1–19; that stretch reads MAATLLSQCYRIYNSDACK. 16 PPR repeats span residues 63–93, 94–128, 129–163, 164–194, 195–229, 230–264, 266–296, 297–332, 333–363, 364–394, 395–429, 430–464, 465–495, 496–530, 531–561, and 567–597; these read NDPALTRALRGFADSRLMEDALQLFDEMNKA, DAFLWNVMIKGFTSCGLYIEAVQFYSRMVFAGVKA, DTFTYPFVIKSVAGISSLEEGKKIHAMVIKLGFVS, DVYVCNSLISLYMKLGCAWDAEKVFEEMPER, DIVSWNSMISGYLALGDGFSSLMLFKEMLKCGFKP, DRFSTMSALGACSHVYSPKMGKEIHCHAVRSRIET, DVMVMTSILDMYSKYGEVSYAERIFNGMIQR, NIVAWNVMIGCYARNGRVTDAFLCFQKMSEQNGLQP, DVITSINLLPASAILEGRTIHGYAMRRGFLP, HMVLETALIDMYGECGQLKSAEVIFDRMAEK, NVISWNSIIAAYVQNGKNYSALELFQELWDSSLVP, DSTTIASILPAYAESLSLSEGREIHAYIVKSRYWS, NTIILNSLVHMYAMCGDLEDARKCFNHILLK, DVVSWNSIIMAYAVHGFGRISVWLFSEMIASRVNP, NKSTFASLLAACSISGMVDEGWEYFESMKRE, and GIEHYGCMLDLIGRTGNFSAAKRFLEEMPFV. Residues 602-677 are type E motif; that stretch reads IWGSLLNASR…TSSRSTVEAK (76 aa). Residues 678–708 form a type E(+) motif region; it reads GKSHVFTNGDRSHVATNKIYEVLDVVSRMVG. The segment at 710-804 is type DYW motif; it reads EDIYVHCVSR…NGRCSCGNYW (95 aa).

It belongs to the PPR family. PCMP-H subfamily.

The protein resides in the plastid. Its subcellular location is the chloroplast. The chain is Pentatricopeptide repeat-containing protein At4g35130, chloroplastic (PCMP-H27) from Arabidopsis thaliana (Mouse-ear cress).